We begin with the raw amino-acid sequence, 687 residues long: Elongation factor G (687 aa).

The region spanning asparagine 8–leucine 282 is the tr-type G domain. Residues alanine 17 to threonine 24, aspartate 81 to histidine 85, and asparagine 135 to aspartate 138 each bind GTP.

It belongs to the TRAFAC class translation factor GTPase superfamily. Classic translation factor GTPase family. EF-G/EF-2 subfamily.

It is found in the cytoplasm. In terms of biological role, catalyzes the GTP-dependent ribosomal translocation step during translation elongation. During this step, the ribosome changes from the pre-translocational (PRE) to the post-translocational (POST) state as the newly formed A-site-bound peptidyl-tRNA and P-site-bound deacylated tRNA move to the P and E sites, respectively. Catalyzes the coordinated movement of the two tRNA molecules, the mRNA and conformational changes in the ribosome. In Clostridium novyi (strain NT), this protein is Elongation factor G.